Here is a 175-residue protein sequence, read N- to C-terminus: ATP synthase subunit b (175 aa).

The helical transmembrane segment at 19–39 threads the bilayer; it reads LVVGTIAFALLVFVLLKFVMP.

The protein belongs to the ATPase B chain family. As to quaternary structure, F-type ATPases have 2 components, F(1) - the catalytic core - and F(0) - the membrane proton channel. F(1) has five subunits: alpha(3), beta(3), gamma(1), delta(1), epsilon(1). F(0) has three main subunits: a(1), b(2) and c(10-14). The alpha and beta chains form an alternating ring which encloses part of the gamma chain. F(1) is attached to F(0) by a central stalk formed by the gamma and epsilon chains, while a peripheral stalk is formed by the delta and b chains.

It is found in the cell membrane. In terms of biological role, f(1)F(0) ATP synthase produces ATP from ADP in the presence of a proton or sodium gradient. F-type ATPases consist of two structural domains, F(1) containing the extramembraneous catalytic core and F(0) containing the membrane proton channel, linked together by a central stalk and a peripheral stalk. During catalysis, ATP synthesis in the catalytic domain of F(1) is coupled via a rotary mechanism of the central stalk subunits to proton translocation. Functionally, component of the F(0) channel, it forms part of the peripheral stalk, linking F(1) to F(0). The polypeptide is ATP synthase subunit b (Salinispora tropica (strain ATCC BAA-916 / DSM 44818 / JCM 13857 / NBRC 105044 / CNB-440)).